Here is a 481-residue protein sequence, read N- to C-terminus: Cardiolipin synthase A (481 aa).

2 helical membrane-spanning segments follow: residues F10–L30 and I40–F60. 2 consecutive PLD phosphodiesterase domains span residues V220–Y247 and Q394–S421. Residues H225, K227, D232, H399, K401, and D406 contribute to the active site.

This sequence belongs to the phospholipase D family. Cardiolipin synthase subfamily. ClsA sub-subfamily.

Its subcellular location is the cell inner membrane. It carries out the reaction 2 a 1,2-diacyl-sn-glycero-3-phospho-(1'-sn-glycerol) = a cardiolipin + glycerol. Its function is as follows. Catalyzes the reversible phosphatidyl group transfer from one phosphatidylglycerol molecule to another to form cardiolipin (CL) (diphosphatidylglycerol) and glycerol. The chain is Cardiolipin synthase A from Pseudomonas putida (Arthrobacter siderocapsulatus).